A 587-amino-acid chain; its full sequence is Phosphomethylpyrimidine synthase (587 aa).

Substrate is bound by residues N218, M247, Y276, H312, 332-334 (SRG), 373-376 (DGLR), and E412. Residue H416 participates in Zn(2+) binding. Substrate is bound at residue Y439. Residue H480 participates in Zn(2+) binding. C560, C563, and C568 together coordinate [4Fe-4S] cluster.

It belongs to the ThiC family. It depends on [4Fe-4S] cluster as a cofactor.

It carries out the reaction 5-amino-1-(5-phospho-beta-D-ribosyl)imidazole + S-adenosyl-L-methionine = 4-amino-2-methyl-5-(phosphooxymethyl)pyrimidine + CO + 5'-deoxyadenosine + formate + L-methionine + 3 H(+). Its pathway is cofactor biosynthesis; thiamine diphosphate biosynthesis. Its function is as follows. Catalyzes the synthesis of the hydroxymethylpyrimidine phosphate (HMP-P) moiety of thiamine from aminoimidazole ribotide (AIR) in a radical S-adenosyl-L-methionine (SAM)-dependent reaction. The protein is Phosphomethylpyrimidine synthase of Porphyromonas gingivalis (strain ATCC 33277 / DSM 20709 / CIP 103683 / JCM 12257 / NCTC 11834 / 2561).